Here is a 145-residue protein sequence, read N- to C-terminus: D-aminoacyl-tRNA deacylase (145 aa).

The short motif at 137–138 is the Gly-cisPro motif, important for rejection of L-amino acids element; it reads GP.

Belongs to the DTD family. In terms of assembly, homodimer.

It localises to the cytoplasm. It catalyses the reaction glycyl-tRNA(Ala) + H2O = tRNA(Ala) + glycine + H(+). The catalysed reaction is a D-aminoacyl-tRNA + H2O = a tRNA + a D-alpha-amino acid + H(+). Functionally, an aminoacyl-tRNA editing enzyme that deacylates mischarged D-aminoacyl-tRNAs. Also deacylates mischarged glycyl-tRNA(Ala), protecting cells against glycine mischarging by AlaRS. Acts via tRNA-based rather than protein-based catalysis; rejects L-amino acids rather than detecting D-amino acids in the active site. By recycling D-aminoacyl-tRNA to D-amino acids and free tRNA molecules, this enzyme counteracts the toxicity associated with the formation of D-aminoacyl-tRNA entities in vivo and helps enforce protein L-homochirality. This Ruegeria pomeroyi (strain ATCC 700808 / DSM 15171 / DSS-3) (Silicibacter pomeroyi) protein is D-aminoacyl-tRNA deacylase.